Consider the following 167-residue polypeptide: Epithelial membrane protein 2 (167 aa).

A helical transmembrane segment spans residues 1–21 (MLVLLAFIIAFHITSAALLFI). Residues Asn44, Asn47, and Asn52 are each glycosylated (N-linked (GlcNAc...) asparagine). 3 consecutive transmembrane segments (helical) span residues 67–87 (TMILSTILCCIAFFIFVLQLF), 95–115 (FVLTSIIQLMSCLCVMIAASI), and 143–163 (YILAWVAFACTFISGMMYLIL).

This sequence belongs to the PMP-22/EMP/MP20 family. Interacts with PTK2; regulates PTK2 activation and localization. Interacts with ITGB3; regulates the levels of the heterodimer ITGA5-ITGB3 integrin surface expression. Interacts with P2RX7 (via C-terminus). Interacts with ITGB1; the interaction may be direct or indirect and ITGB1 has a heterodimer form. As to expression, expressed in ciliary body epithelia, sclera, cornea, and retinal pigment epithelium (at protein level). Expressed in lung and endometrial tissue; expression is particularly abundant in secretory endometrium (at protein level). Expressed in placental villous syncytiotrophoblasts and cytotrophoblasts and on the membrane of interstitial trophoblasts (at protein level).

It localises to the golgi apparatus membrane. Its subcellular location is the cell membrane. The protein localises to the apical cell membrane. It is found in the membrane raft. The protein resides in the cytoplasm. It localises to the nucleus. Its subcellular location is the perinuclear region. Functions as a key regulator of cell membrane composition by regulating protein surface expression. Also, plays a role in regulation of processes including cell migration, cell proliferation, cell contraction and cell adhesion. Regulates transepithelial migration of neutrophils into the alveolar lumen, potentially via mediation of cell surface expression of adhesion markers and lipid raft formation. Negatively regulates caveolae formation by reducing CAV1 expression and CAV1 amount by increasing lysosomal degradation. Facilitates surface trafficking and formation of lipid rafts bearing GPI-anchor proteins. Regulates surface expression of MHC1 and ICAM1 proteins increasing susceptibility to T-cell mediated cytotoxicity. Regulates the plasma membrane expression of the integrin heterodimers ITGA6-ITGB1, ITGA5-ITGB3 and ITGA5-ITGB1 resulting in modulation of cell-matrix adhesion. Also regulates many processes through PTK2. Regulates blood vessel endothelial cell migration and angiogenesis by regulating VEGF protein expression through PTK2 activation. Regulates cell migration and cell contraction through PTK2 and SRC activation. Regulates focal adhesion density, F-actin conformation and cell adhesion capacity through interaction with PTK2. Positively regulates cell proliferation. Plays a role during cell death and cell blebbing. Promotes angiogenesis and vasculogenesis through induction of VEGFA via a HIF1A-dependent pathway. Also plays a role in embryo implantation by regulating surface trafficking of integrin heterodimer ITGA5-ITGB3. Plays a role in placental angiogenesis and uterine natural killer cell regulation at the maternal-fetal placental interface, however not required in the maternal tissues for a viable pregnancy. Involved in the early stages of embryogenic development and cardiogenesis, potentially via regulation of epithelial-mesenchymal transition timing. May play a role in glomerular filtration. In Homo sapiens (Human), this protein is Epithelial membrane protein 2 (EMP2).